The chain runs to 57 residues: uncharacterized protein (57 aa).

A compositionally biased stretch (basic and acidic residues) spans 1–10 (MKRSRTEVGR). Residues 1–25 (MKRSRTEVGRWRMQRQASRRKSRWL) are disordered.

It belongs to the YciY family.

This is an uncharacterized protein from Escherichia coli O1:K1 / APEC.